Consider the following 319-residue polypeptide: ATP-dependent 6-phosphofructokinase (319 aa).

Gly11 serves as a coordination point for ATP. Residue 21–25 (RAVTR) participates in ADP binding. Residues 72-73 (RF) and 102-105 (GDGS) contribute to the ATP site. Asp103 is a Mg(2+) binding site. 125–127 (SID) provides a ligand contact to substrate. Asp127 functions as the Proton acceptor in the catalytic mechanism. Arg154 lines the ADP pocket. Substrate is bound by residues Arg162 and 169-171 (MGR). Residues 185 to 187 (GAD) and 213 to 215 (KKH) contribute to the ADP site. Substrate-binding positions include Glu222, Arg243, and 249-252 (HMQR).

The protein belongs to the phosphofructokinase type A (PFKA) family. ATP-dependent PFK group I subfamily. Prokaryotic clade 'B1' sub-subfamily. As to quaternary structure, homotetramer. It depends on Mg(2+) as a cofactor.

It is found in the cytoplasm. The enzyme catalyses beta-D-fructose 6-phosphate + ATP = beta-D-fructose 1,6-bisphosphate + ADP + H(+). It functions in the pathway carbohydrate degradation; glycolysis; D-glyceraldehyde 3-phosphate and glycerone phosphate from D-glucose: step 3/4. With respect to regulation, allosterically activated by ADP and other diphosphonucleosides, and allosterically inhibited by phosphoenolpyruvate. Catalyzes the phosphorylation of D-fructose 6-phosphate to fructose 1,6-bisphosphate by ATP, the first committing step of glycolysis. The polypeptide is ATP-dependent 6-phosphofructokinase (Lactobacillus gasseri (strain ATCC 33323 / DSM 20243 / BCRC 14619 / CIP 102991 / JCM 1131 / KCTC 3163 / NCIMB 11718 / NCTC 13722 / AM63)).